A 582-amino-acid polypeptide reads, in one-letter code: DBIRD complex subunit ZNF326 (582 aa).

Positions 1 to 124 (MDFEDDYTHS…YRNSLDSFGG (124 aa)) are mediates transcriptional activation. A phosphoserine mark is found at S48, S56, S63, S69, S81, S82, S91, S106, S114, S118, S121, and S137. K140 participates in a covalent cross-link: Glycyl lysine isopeptide (Lys-Gly) (interchain with G-Cter in SUMO2). A disordered region spans residues 154-194 (YSSYSSFSSPHMKPAPVGSRGRGTPAYPESTFGSRNYDAFG). Residue R173 is modified to Omega-N-methylarginine. At S212 the chain carries Phosphoserine. R235 bears the Omega-N-methylarginine mark. The short motif at 238-260 (KRKMMQPFNKPSGTFIKKPKLAK) is the Bipartite nuclear localization signal element. K240 participates in a covalent cross-link: Glycyl lysine isopeptide (Lys-Gly) (interchain with G-Cter in SUMO2). Residues 243–302 (QPFNKPSGTFIKKPKLAKPMEKISLSKSPTKTDPKNEEEEKRRIEARREKQRRRREKNSE) form a disordered region. N6-acetyllysine; alternate is present on K247. A Glycyl lysine isopeptide (Lys-Gly) (interchain with G-Cter in SUMO2); alternate cross-link involves residue K247. Residue S249 is modified to Phosphoserine. T251 bears the Phosphothreonine mark. Residues K254 and K264 each participate in a glycyl lysine isopeptide (Lys-Gly) (interchain with G-Cter in SUMO2) cross-link. S270 is modified (phosphoserine). Positions 272–290 (TKTDPKNEEEEKRRIEARR) are enriched in basic and acidic residues. A C2H2 AKAP95-type 1 zinc finger spans residues 314-336 (CSFCKFRTFEEKDIELHLESSSH). Residue K401 forms a Glycyl lysine isopeptide (Lys-Gly) (interchain with G-Cter in SUMO2) linkage. A C2H2 AKAP95-type 2 zinc finger spans residues 407–430 (CSACSVYIPALHSSVQQHLKSPDH). Glycyl lysine isopeptide (Lys-Gly) (interchain with G-Cter in SUMO2) cross-links involve residues K459 and K467. Residues 472–582 (FEIQDHSQDQ…DFPVEQPEEN (111 aa)) form a disordered region. A compositionally biased stretch (acidic residues) spans 483–523 (IEGDEEDEEKIDEPIEEEEDEDEEEEAEEVGEVEEVEEVEE). Over residues 530–545 (EGEGNIQGVGEGGEVG) the composition is skewed to gly residues. Residues 552–567 (GVGEVEEVEELEEETA) are compositionally biased toward acidic residues.

It belongs to the AKAP95 family. Component of the DBIRD complex. Interacts with CCAR2; the interaction is direct.

The protein localises to the nucleus matrix. Its function is as follows. Core component of the DBIRD complex, a multiprotein complex that acts at the interface between core mRNP particles and RNA polymerase II (RNAPII) and integrates transcript elongation with the regulation of alternative splicing: the DBIRD complex affects local transcript elongation rates and alternative splicing of a large set of exons embedded in (A + T)-rich DNA regions. May play a role in neuronal differentiation and is able to bind DNA and activate expression in vitro. This Homo sapiens (Human) protein is DBIRD complex subunit ZNF326 (ZNF326).